A 90-amino-acid polypeptide reads, in one-letter code: UPF0298 protein BLi01717/BL02989 (90 aa).

This sequence belongs to the UPF0298 family.

It localises to the cytoplasm. The polypeptide is UPF0298 protein BLi01717/BL02989 (Bacillus licheniformis (strain ATCC 14580 / DSM 13 / JCM 2505 / CCUG 7422 / NBRC 12200 / NCIMB 9375 / NCTC 10341 / NRRL NRS-1264 / Gibson 46)).